A 305-amino-acid chain; its full sequence is Coenzyme PQQ synthesis protein B (305 aa).

This sequence belongs to the PqqB family.

It participates in cofactor biosynthesis; pyrroloquinoline quinone biosynthesis. In terms of biological role, may be involved in the transport of PQQ or its precursor to the periplasm. The sequence is that of Coenzyme PQQ synthesis protein B from Methylobacillus flagellatus (strain ATCC 51484 / DSM 6875 / VKM B-1610 / KT).